The following is a 130-amino-acid chain: IHQEPIYPYILVEHGADISANYDRTIINSSEYGNFEIVKYLIDNGADITAINEYGFTPLDLSSKNGHYEIVKLLVECRASIIKTDNLTLILASENGHIKIVKLLVENGADIRYHNNYSLQLALKEAIVKS.

3 ANK repeats span residues 21–50 (NYDR…DITA), 54–83 (YGFT…SIIK), and 85–113 (DNLT…DIRY).

The protein is Putative ankyrin repeat protein R886 of Acanthamoeba polyphaga (Amoeba).